The sequence spans 1012 residues: Structural polyprotein (1012 aa).

Residue Asp30 participates in a divalent metal cation binding. Residues 513-755 form the Peptidase S50 domain; it reads ADKGYEVVAN…AGRQYHLAMA (243 aa). Catalysis depends on Ser652, which acts as the Nucleophile. The active site involves Lys692. The disordered stretch occupies residues 969-1012; the sequence is AMEMKHRNPRRALPKPKPKPNAPTQRPPGRLGRWIRTVSDEDLE. Positions 975–986 are enriched in basic residues; that stretch reads RNPRRALPKPKP. Residues 1003–1012 form an interaction with VP1 protein region; the sequence is IRTVSDEDLE.

Homotrimer. A central divalent metal stabilizes the VP2 trimer. Interacts with host ITGA4/ITGB1. As to quaternary structure, homodimer. Interacts (via C-terminus) with VP1 in the cytoplasm. Interacts with VP2. Post-translationally, specific enzymatic cleavages yield mature proteins. The capsid assembly seems to be regulated by polyprotein processing. The protease VP4 cleaves itself off the polyprotein, thus releasing pre-VP2 and VP3 within the infected cell. During capsid assembly, the C-terminus of pre-VP2 is further processed by VP4, giving rise to VP2, the external capsid protein and three small peptides that all stay closely associated with the capsid.

Its subcellular location is the virion. It localises to the host cytoplasm. In terms of biological role, capsid protein VP2 self assembles to form an icosahedral capsid with a T=13 symmetry, about 70 nm in diameter, and consisting of 260 VP2 trimers. The capsid encapsulates the genomic dsRNA. VP2 is also involved in attachment and entry into the host cell by interacting with host ITGA4/ITGB1. Its function is as follows. The precursor of VP2 plays an important role in capsid assembly. First, pre-VP2 and VP2 oligomers assemble to form a procapsid. Then, the pre-VP2 intermediates may be processed into VP2 proteins by proteolytic cleavage mediated by VP4 to obtain the mature virion. The final capsid is composed of pentamers and hexamers but VP2 has a natural tendency to assemble into all-pentameric structures. Therefore pre-VP2 may be required to allow formation of the hexameric structures. Protease VP4 is a serine protease that cleaves the polyprotein into its final products. Pre-VP2 is first partially cleaved, and may be completely processed by VP4 upon capsid maturation. Functionally, capsid protein VP3 plays a key role in virion assembly by providing a scaffold for the capsid made of VP2. May self-assemble to form a T=4-like icosahedral inner-capsid composed of at least 180 trimers. Plays a role in genomic RNA packaging by recruiting VP1 into the capsid and interacting with the dsRNA genome segments to form a ribonucleoprotein complex. Additionally, the interaction of the VP3 C-terminal tail with VP1 removes the inherent structural blockade of the polymerase active site. Thus, VP3 can also function as a transcriptional activator. In terms of biological role, structural peptide 1 is a small peptide derived from pre-VP2 C-terminus. It destabilizes and perforates cell membranes, suggesting a role during entry. Its function is as follows. Structural peptide 2 is a small peptide derived from pre-VP2 C-terminus. It is not essential for the virus viability, but viral growth is affected when missing. Structural peptide 3 is a small peptide derived from pre-VP2 C-terminus. It is not essential for the virus viability, but viral growth is affected when missing. Functionally, structural peptide 4 is a small peptide derived from pVP2 C-terminus. It is essential for the virus viability. This is Structural polyprotein from Gallus gallus (Chicken).